A 618-amino-acid polypeptide reads, in one-letter code: MFDLEYQLKNLPDKPGVYLMKNNLGEIIYVGKAKILKNRVRQYFQKSQKHSEKVKAMVKNIEEFEYIITDSEIEALILECNLIKKYRPKYNILLKDDKHYPFIKVTLAEDFPRVISTRKVTKDGSKYFGPYVDGSSVKDIIELIKKTFPIRTCKKNIVEGAKAIRPCLNYQIGLCKAPCAQYIKKSEYREIIDDVIKLLSGKHLDIVENFKLNMEKAAENLEFEKAAMLRDKINIIEKIGEKQKIILNNFDNEDYISLYSDGKDTCFQVFFLRNGKIVGREHFIIEDTFDTNSSTLISNFLKEFYGGTAYIPKTIYVPNIEDEALLEQWLTLKKESKSTIKIPIKGEKKNILDLVEKNAKTTLENFKLKYLQEKALYDNVLKDLKNILSLQEEPIRIEAFDISNIQGFDSVGSMVVFEKGRAKPSDYRRFKISTVKGADDYKSMKEILTRRFQHGLSEIKSIQDRKLEFSSGKFSVFPDLILMDGGKGQINIALEVLNTFNIDIPVCGMVKDNKHRTRGLIYNGEEIIINKYGSVMKFITRVQDEVHRFAISYHRSLRGKNSFHSLLDDIPNIGEKRKKDLLFNFKSIDNIKKATYEELLSIPSMDKKSAESVLEFFK.

The region spanning 13–92 (DKPGVYLMKN…IKKYRPKYNI (80 aa)) is the GIY-YIG domain. The UVR domain occupies 204-239 (LDIVENFKLNMEKAAENLEFEKAAMLRDKINIIEKI).

This sequence belongs to the UvrC family. Interacts with UvrB in an incision complex.

It is found in the cytoplasm. Functionally, the UvrABC repair system catalyzes the recognition and processing of DNA lesions. UvrC both incises the 5' and 3' sides of the lesion. The N-terminal half is responsible for the 3' incision and the C-terminal half is responsible for the 5' incision. This Clostridium botulinum (strain Loch Maree / Type A3) protein is UvrABC system protein C.